The sequence spans 446 residues: Argininosuccinate synthase (446 aa).

ATP contacts are provided by residues 17 to 25 (AFSGGLDTS) and Ala43. Position 99 (Tyr99) interacts with L-citrulline. ATP-binding residues include Gly129 and Thr131. Residues Thr131, Asn135, and Asp136 each coordinate L-aspartate. Asn135 is a binding site for L-citrulline. Asp136 serves as a coordination point for ATP. L-citrulline is bound by residues Arg139 and Ser192. Residue Asp194 coordinates ATP. The L-citrulline site is built by Thr201, Glu203, and Glu280.

Belongs to the argininosuccinate synthase family. Type 2 subfamily. In terms of assembly, homotetramer.

It is found in the cytoplasm. The catalysed reaction is L-citrulline + L-aspartate + ATP = 2-(N(omega)-L-arginino)succinate + AMP + diphosphate + H(+). The protein operates within amino-acid biosynthesis; L-arginine biosynthesis; L-arginine from L-ornithine and carbamoyl phosphate: step 2/3. This is Argininosuccinate synthase from Burkholderia mallei (strain NCTC 10247).